Consider the following 307-residue polypeptide: Phospho-N-acetylmuramoyl-pentapeptide-transferase (307 aa).

Helical transmembrane passes span 3-23 (IILF…KYWI), 47-67 (SGTP…FLFF), 71-91 (FFPS…DFKL), 105-125 (IFLS…DYKI), 137-157 (IFYV…INLT), 162-182 (GLAG…NFQF), 186-206 (LTLE…FNSH), 210-230 (IFMG…LSII), 237-257 (LVFL…QVFF), and 285-305 (VVWR…ILWN).

This sequence belongs to the glycosyltransferase 4 family. MraY subfamily. The cofactor is Mg(2+).

It is found in the cell inner membrane. It catalyses the reaction UDP-N-acetyl-alpha-D-muramoyl-L-alanyl-gamma-D-glutamyl-meso-2,6-diaminopimeloyl-D-alanyl-D-alanine + di-trans,octa-cis-undecaprenyl phosphate = di-trans,octa-cis-undecaprenyl diphospho-N-acetyl-alpha-D-muramoyl-L-alanyl-D-glutamyl-meso-2,6-diaminopimeloyl-D-alanyl-D-alanine + UMP. It functions in the pathway cell wall biogenesis; peptidoglycan biosynthesis. Catalyzes the initial step of the lipid cycle reactions in the biosynthesis of the cell wall peptidoglycan: transfers peptidoglycan precursor phospho-MurNAc-pentapeptide from UDP-MurNAc-pentapeptide onto the lipid carrier undecaprenyl phosphate, yielding undecaprenyl-pyrophosphoryl-MurNAc-pentapeptide, known as lipid I. This chain is Phospho-N-acetylmuramoyl-pentapeptide-transferase, found in Dictyoglomus turgidum (strain DSM 6724 / Z-1310).